Consider the following 807-residue polypeptide: uncharacterized protein (807 aa).

A Reverse transcriptase domain is found at Ile281–Ile566.

It localises to the mitochondrion. This is an uncharacterized protein from Schizosaccharomyces pombe (strain 972 / ATCC 24843) (Fission yeast).